The following is a 158-amino-acid chain: Cyclic pyranopterin monophosphate synthase (158 aa).

Residues 76–78 and 114–115 contribute to the substrate site; these read LCH and ME. Residue D129 is part of the active site.

This sequence belongs to the MoaC family. Homohexamer; trimer of dimers.

It catalyses the reaction (8S)-3',8-cyclo-7,8-dihydroguanosine 5'-triphosphate = cyclic pyranopterin phosphate + diphosphate. The protein operates within cofactor biosynthesis; molybdopterin biosynthesis. In terms of biological role, catalyzes the conversion of (8S)-3',8-cyclo-7,8-dihydroguanosine 5'-triphosphate to cyclic pyranopterin monophosphate (cPMP). The polypeptide is Cyclic pyranopterin monophosphate synthase (Brucella anthropi (strain ATCC 49188 / DSM 6882 / CCUG 24695 / JCM 21032 / LMG 3331 / NBRC 15819 / NCTC 12168 / Alc 37) (Ochrobactrum anthropi)).